Here is a 152-residue protein sequence, read N- to C-terminus: 6,7-dimethyl-8-ribityllumazine synthase (152 aa).

5-amino-6-(D-ribitylamino)uracil is bound by residues F21, 55–57 (AFE), and 79–81 (AVI). 84–85 (AT) contributes to the (2S)-2-hydroxy-3-oxobutyl phosphate binding site. The Proton donor role is filled by H87. A 5-amino-6-(D-ribitylamino)uracil-binding site is contributed by F112. R126 lines the (2S)-2-hydroxy-3-oxobutyl phosphate pocket.

This sequence belongs to the DMRL synthase family. In terms of assembly, forms an icosahedral capsid composed of 60 subunits, arranged as a dodecamer of pentamers.

It carries out the reaction (2S)-2-hydroxy-3-oxobutyl phosphate + 5-amino-6-(D-ribitylamino)uracil = 6,7-dimethyl-8-(1-D-ribityl)lumazine + phosphate + 2 H2O + H(+). It participates in cofactor biosynthesis; riboflavin biosynthesis; riboflavin from 2-hydroxy-3-oxobutyl phosphate and 5-amino-6-(D-ribitylamino)uracil: step 1/2. In terms of biological role, catalyzes the formation of 6,7-dimethyl-8-ribityllumazine by condensation of 5-amino-6-(D-ribitylamino)uracil with 3,4-dihydroxy-2-butanone 4-phosphate. This is the penultimate step in the biosynthesis of riboflavin. This chain is 6,7-dimethyl-8-ribityllumazine synthase, found in Exiguobacterium sibiricum (strain DSM 17290 / CCUG 55495 / CIP 109462 / JCM 13490 / 255-15).